A 348-amino-acid chain; its full sequence is A-type ATP synthase subunit C (348 aa).

Belongs to the V-ATPase V0D/AC39 subunit family. In terms of assembly, has multiple subunits with at least A(3), B(3), C, D, E, F, H, I and proteolipid K(x).

Its subcellular location is the cell membrane. Functionally, component of the A-type ATP synthase that produces ATP from ADP in the presence of a proton gradient across the membrane. In Halorubrum lacusprofundi (strain ATCC 49239 / DSM 5036 / JCM 8891 / ACAM 34), this protein is A-type ATP synthase subunit C.